Here is a 233-residue protein sequence, read N- to C-terminus: Ubiquinone biosynthesis O-methyltransferase (233 aa).

Residues Arg-37, Gly-56, Asp-77, and Met-121 each coordinate S-adenosyl-L-methionine.

It belongs to the methyltransferase superfamily. UbiG/COQ3 family.

The catalysed reaction is a 3-demethylubiquinol + S-adenosyl-L-methionine = a ubiquinol + S-adenosyl-L-homocysteine + H(+). The enzyme catalyses a 3-(all-trans-polyprenyl)benzene-1,2-diol + S-adenosyl-L-methionine = a 2-methoxy-6-(all-trans-polyprenyl)phenol + S-adenosyl-L-homocysteine + H(+). It participates in cofactor biosynthesis; ubiquinone biosynthesis. Functionally, O-methyltransferase that catalyzes the 2 O-methylation steps in the ubiquinone biosynthetic pathway. This is Ubiquinone biosynthesis O-methyltransferase from Azoarcus sp. (strain BH72).